Reading from the N-terminus, the 267-residue chain is tRNA pseudouridine synthase A (267 aa).

The Nucleophile role is filled by Asp-51. Residue Tyr-109 coordinates substrate.

The protein belongs to the tRNA pseudouridine synthase TruA family. Homodimer.

The catalysed reaction is uridine(38/39/40) in tRNA = pseudouridine(38/39/40) in tRNA. Functionally, formation of pseudouridine at positions 38, 39 and 40 in the anticodon stem and loop of transfer RNAs. This chain is tRNA pseudouridine synthase A, found in Staphylococcus aureus (strain bovine RF122 / ET3-1).